Reading from the N-terminus, the 130-residue chain is UPF0251 protein Swol_2090 (130 aa).

The protein belongs to the UPF0251 family.

The polypeptide is UPF0251 protein Swol_2090 (Syntrophomonas wolfei subsp. wolfei (strain DSM 2245B / Goettingen)).